The chain runs to 333 residues: Foldase protein PrsA (333 aa).

The first 22 residues, 1–22, serve as a signal peptide directing secretion; sequence MKSAKQIATALLVGMFTFSAVG. Residue C23 is the site of N-palmitoyl cysteine attachment. Residue C23 is the site of S-diacylglycerol cysteine attachment. The PpiC domain occupies 192–283; that stretch reads PNTVHLAHIL…FGWHVIKCIK (92 aa).

Belongs to the PrsA family.

Its subcellular location is the cell membrane. It carries out the reaction [protein]-peptidylproline (omega=180) = [protein]-peptidylproline (omega=0). Its function is as follows. Plays a major role in protein secretion by helping the post-translocational extracellular folding of several secreted proteins. The protein is Foldase protein PrsA of Clostridium acetobutylicum (strain ATCC 824 / DSM 792 / JCM 1419 / IAM 19013 / LMG 5710 / NBRC 13948 / NRRL B-527 / VKM B-1787 / 2291 / W).